The following is a 119-amino-acid chain: Small ribosomal subunit protein bS6 (119 aa).

The interval 99–119 (KKEKKQSRKEEGSENSEKVEE) is disordered.

It belongs to the bacterial ribosomal protein bS6 family.

Functionally, binds together with bS18 to 16S ribosomal RNA. This is Small ribosomal subunit protein bS6 from Thermosipho melanesiensis (strain DSM 12029 / CIP 104789 / BI429).